Reading from the N-terminus, the 286-residue chain is Bifunctional protein FolD (286 aa).

Residues 170 to 172 (GHS) and Ile-236 each bind NADP(+).

Belongs to the tetrahydrofolate dehydrogenase/cyclohydrolase family. Homodimer.

It carries out the reaction (6R)-5,10-methylene-5,6,7,8-tetrahydrofolate + NADP(+) = (6R)-5,10-methenyltetrahydrofolate + NADPH. It catalyses the reaction (6R)-5,10-methenyltetrahydrofolate + H2O = (6R)-10-formyltetrahydrofolate + H(+). It functions in the pathway one-carbon metabolism; tetrahydrofolate interconversion. Catalyzes the oxidation of 5,10-methylenetetrahydrofolate to 5,10-methenyltetrahydrofolate and then the hydrolysis of 5,10-methenyltetrahydrofolate to 10-formyltetrahydrofolate. The chain is Bifunctional protein FolD from Methanococcoides burtonii (strain DSM 6242 / NBRC 107633 / OCM 468 / ACE-M).